Consider the following 170-residue polypeptide: Transcription factor E (170 aa).

One can recognise an HTH TFE/IIEalpha-type domain in the interval 1 to 93 (MKEAYLYIVE…TWYVDDEIIR (93 aa)).

Belongs to the TFE family. In terms of assembly, monomer. Interaction with RNA polymerase subunits RpoF and RpoE is necessary for Tfe stimulatory transcription activity. Able to interact with Tbp and RNA polymerase in the absence of DNA promoter. Interacts both with the preinitiation and elongation complexes.

Its function is as follows. Transcription factor that plays a role in the activation of archaeal genes transcribed by RNA polymerase. Facilitates transcription initiation by enhancing TATA-box recognition by TATA-box-binding protein (Tbp), and transcription factor B (Tfb) and RNA polymerase recruitment. Not absolutely required for transcription in vitro, but particularly important in cases where Tbp or Tfb function is not optimal. It dynamically alters the nucleic acid-binding properties of RNA polymerases by stabilizing the initiation complex and destabilizing elongation complexes. Seems to translocate with the RNA polymerase following initiation and acts by binding to the non template strand of the transcription bubble in elongation complexes. The polypeptide is Transcription factor E (Pyrobaculum islandicum (strain DSM 4184 / JCM 9189 / GEO3)).